Consider the following 305-residue polypeptide: Protoheme IX farnesyltransferase 2 (305 aa).

7 helical membrane passes run 38–58 (LITTFTGMWLALHISGLSFLG), 60–80 (LNTVLLTLIGSSLIIAGSCAV), 115–135 (ILLIALGLIMLLMTTVMAAVI), 157–177 (INTVVGSVSGAVPPLIGWTAV), 181–201 (IGVVAWVLFMILFIWQIPHFL), 236–256 (VACLLPLPFFLGSLGLPIVIL), and 285–305 (FVYSLNYMTIYFVAMVVFTLF).

It belongs to the UbiA prenyltransferase family. Protoheme IX farnesyltransferase subfamily. As to quaternary structure, interacts with CtaA.

It is found in the cell membrane. The enzyme catalyses heme b + (2E,6E)-farnesyl diphosphate + H2O = Fe(II)-heme o + diphosphate. It functions in the pathway porphyrin-containing compound metabolism; heme O biosynthesis; heme O from protoheme: step 1/1. In terms of biological role, converts heme B (protoheme IX) to heme O by substitution of the vinyl group on carbon 2 of heme B porphyrin ring with a hydroxyethyl farnesyl side group. This Bacillus velezensis (strain DSM 23117 / BGSC 10A6 / LMG 26770 / FZB42) (Bacillus amyloliquefaciens subsp. plantarum) protein is Protoheme IX farnesyltransferase 2.